The primary structure comprises 145 residues: uncharacterized protein (145 aa).

Residues 46 to 66 (FFFLFFLFFFFFFTFQFLVAF) traverse the membrane as a helical segment.

It is found in the membrane. This is an uncharacterized protein from Saccharomyces cerevisiae (strain ATCC 204508 / S288c) (Baker's yeast).